The primary structure comprises 330 residues: Mas-related G-protein coupled receptor member X2 (330 aa).

Over 1–33 (MDPTTLVWGTESTTMNGNDQALPLLCGKETLIL) the chain is Extracellular. Residues 34–54 (VVLILFIALVGLVGNAFVLWL) traverse the membrane as a helical segment. The Cytoplasmic portion of the chain corresponds to 55 to 63 (LGFRMRRNA). A helical membrane pass occupies residues 64-84 (FSVYVLSLAGADFLFLCFPMI). The Extracellular segment spans residues 85-96 (NCLAYLINFFHS). A helical membrane pass occupies residues 97–117 (ISINFPSFFTTVMTCAYLAGL). The Cytoplasmic portion of the chain corresponds to 118 to 144 (SMLSAISTERCLSVLWPIWYRSRRPRH). A helical membrane pass occupies residues 145–165 (LSAVMCVLLWALSLLLSILEG). The Extracellular segment spans residues 166–184 (KFCGFLFSDGDSGWCQTFD). The chain crosses the membrane as a helical span at residues 185–205 (FITAAWLMFLFVVLCGSSLAL). Residues 206-228 (LVRILCGSRGLPLTRLYLTILLT) are Cytoplasmic-facing. A helical membrane pass occupies residues 229–249 (VLIFLLCGLPFGIQWFLILWI). Residues 250–264 (WKNSDVLFCHIHPVS) are Extracellular-facing. A helical membrane pass occupies residues 265-285 (VVLSSFNSSANPIIYFFVGSF). The Cytoplasmic segment spans residues 286-330 (RKQWRLRQPVLKLALQRALQDTAEVDHSEGCFSQGTLEMSGSSLV).

It belongs to the G-protein coupled receptor 1 family. Mas subfamily.

The protein resides in the cell membrane. Its function is as follows. Mast cell-specific receptor for basic secretagogues, i.e. cationic amphiphilic drugs, as well as endo- or exogenous peptides, consisting of a basic head group and a hydrophobic core. Recognizes and binds small molecules containing a cyclized tetrahydroisoquinoline (THIQ), such as non-steroidal neuromuscular blocking drugs (NMBDs), including tubocurarine and atracurium. In response to these compounds, mediates pseudo-allergic reactions characterized by histamine release, inflammation and airway contraction. This Trachypithecus francoisi (Francois' leaf monkey) protein is Mas-related G-protein coupled receptor member X2 (MRGPRX2).